The chain runs to 436 residues: Methylenetetrahydrofolate--tRNA-(uracil-5-)-methyltransferase TrmFO (436 aa).

Residue 9 to 14 (GAGLAG) coordinates FAD.

This sequence belongs to the MnmG family. TrmFO subfamily. FAD is required as a cofactor.

The protein resides in the cytoplasm. The enzyme catalyses uridine(54) in tRNA + (6R)-5,10-methylene-5,6,7,8-tetrahydrofolate + NADH + H(+) = 5-methyluridine(54) in tRNA + (6S)-5,6,7,8-tetrahydrofolate + NAD(+). The catalysed reaction is uridine(54) in tRNA + (6R)-5,10-methylene-5,6,7,8-tetrahydrofolate + NADPH + H(+) = 5-methyluridine(54) in tRNA + (6S)-5,6,7,8-tetrahydrofolate + NADP(+). Catalyzes the folate-dependent formation of 5-methyl-uridine at position 54 (M-5-U54) in all tRNAs. The sequence is that of Methylenetetrahydrofolate--tRNA-(uracil-5-)-methyltransferase TrmFO from Ligilactobacillus salivarius (strain UCC118) (Lactobacillus salivarius).